The following is a 271-amino-acid chain: Tryptophan synthase alpha chain (271 aa).

Residues E49 and D60 each act as proton acceptor in the active site.

It belongs to the TrpA family. As to quaternary structure, tetramer of two alpha and two beta chains.

It carries out the reaction (1S,2R)-1-C-(indol-3-yl)glycerol 3-phosphate + L-serine = D-glyceraldehyde 3-phosphate + L-tryptophan + H2O. It functions in the pathway amino-acid biosynthesis; L-tryptophan biosynthesis; L-tryptophan from chorismate: step 5/5. Functionally, the alpha subunit is responsible for the aldol cleavage of indoleglycerol phosphate to indole and glyceraldehyde 3-phosphate. This is Tryptophan synthase alpha chain from Burkholderia mallei (strain NCTC 10247).